The primary structure comprises 482 residues: NADH-quinone oxidoreductase subunit N (482 aa).

13 helical membrane passes run 10–30 (ALGP…LILY), 44–64 (VGAI…PLGA), 77–97 (GFAR…LLLA), 113–133 (ILIV…DLIG), 166–186 (FVLG…VYGF), 206–226 (LGLV…LAAV), 243–265 (VTAF…VFIG), 277–296 (IIVF…AIGQ), 302–322 (LMAY…AAGT), 328–348 (GVVV…AVIL), 374–394 (AFCL…AGFF), 397–417 (FYVF…IGVV), and 451–471 (IVLA…APLV).

It belongs to the complex I subunit 2 family. As to quaternary structure, NDH-1 is composed of 14 different subunits. Subunits NuoA, H, J, K, L, M, N constitute the membrane sector of the complex.

It localises to the cell inner membrane. It catalyses the reaction a quinone + NADH + 5 H(+)(in) = a quinol + NAD(+) + 4 H(+)(out). In terms of biological role, NDH-1 shuttles electrons from NADH, via FMN and iron-sulfur (Fe-S) centers, to quinones in the respiratory chain. The immediate electron acceptor for the enzyme in this species is believed to be ubiquinone. Couples the redox reaction to proton translocation (for every two electrons transferred, four hydrogen ions are translocated across the cytoplasmic membrane), and thus conserves the redox energy in a proton gradient. This is NADH-quinone oxidoreductase subunit N from Methylobacterium nodulans (strain LMG 21967 / CNCM I-2342 / ORS 2060).